The primary structure comprises 363 residues: Molybdenum import ATP-binding protein ModC (363 aa).

Positions 1–232 constitute an ABC transporter domain; sequence MLDLDLRRRQ…PGLRPLTGRY (232 aa). ATP is bound at residue 30 to 37; that stretch reads GRSGSGKT. The region spanning 292–358 is the Mop domain; it reads RVSIRNVLPA…IKALTIARGD (67 aa).

Belongs to the ABC transporter superfamily. Molybdate importer (TC 3.A.1.8) family. The complex is composed of two ATP-binding proteins (ModC), two transmembrane proteins (ModB) and a solute-binding protein (ModA).

It localises to the cell inner membrane. The enzyme catalyses molybdate(out) + ATP + H2O = molybdate(in) + ADP + phosphate + H(+). Part of the ABC transporter complex ModABC involved in molybdenum import. Responsible for energy coupling to the transport system. This chain is Molybdenum import ATP-binding protein ModC, found in Paramagnetospirillum magneticum (strain ATCC 700264 / AMB-1) (Magnetospirillum magneticum).